We begin with the raw amino-acid sequence, 736 residues long: Fidgetin (736 aa).

Disordered stretches follow at residues 118 to 155 (GMTP…CGNH), 180 to 248 (TYSG…YSPG), 272 to 295 (IPGY…GSSA), and 341 to 438 (STRG…AEEQ). Over residues 128-150 (VTASVGSSTGVASSLSEPSYSSS) the composition is skewed to low complexity. Positions 205-214 (QPPPPPPPTL) are enriched in pro residues. A compositionally biased stretch (low complexity) spans 216 to 232 (PSYNTSSPNLSSYNYPP). Over residues 352-368 (DTSSLAFKPTKQSMPTD) the composition is skewed to polar residues. ATP-binding positions include Ala467 and 507–512 (GTGRTL).

This sequence belongs to the AAA ATPase family.

The protein localises to the nucleus matrix. It is found in the cytoplasm. The protein resides in the cytoskeleton. Its subcellular location is the microtubule organizing center. It localises to the centrosome. Its function is as follows. ATP-dependent microtubule severing protein. Severs microtubules along their length and depolymerizes their ends, primarily the minus-end, suppressing microtubule growth from and attachment to centrosomes. Microtubule severing may promote rapid reorganization of cellular microtubule arrays and the release of microtubules from the centrosome following nucleation. Microtubule release from the mitotic spindle poles may allow depolymerization of the microtubule end proximal to the spindle pole, leading to poleward microtubule flux and poleward motion of chromosome. This chain is Fidgetin (fign), found in Danio rerio (Zebrafish).